The following is a 338-amino-acid chain: Large ribosomal subunit protein uL10 (338 aa).

The interval 298–338 (TVQQSQSQQPAAEEKKEEKKEEEKKGPSEEEIASGLASLFG) is disordered. Residues 309 to 325 (AEEKKEEKKEEEKKGPS) show a composition bias toward basic and acidic residues.

Belongs to the universal ribosomal protein uL10 family. As to quaternary structure, part of the 50S ribosomal subunit. Forms part of the ribosomal stalk which helps the ribosome interact with GTP-bound translation factors. Forms a heptameric L10(L12)2(L12)2(L12)2 complex, where L10 forms an elongated spine to which the L12 dimers bind in a sequential fashion.

Functionally, forms part of the ribosomal stalk, playing a central role in the interaction of the ribosome with GTP-bound translation factors. This chain is Large ribosomal subunit protein uL10, found in Saccharolobus solfataricus (strain ATCC 35092 / DSM 1617 / JCM 11322 / P2) (Sulfolobus solfataricus).